We begin with the raw amino-acid sequence, 545 residues long: Glucose-6-phosphate isomerase (545 aa).

The active-site Proton donor is the Glu-351. Catalysis depends on residues His-382 and Lys-510.

This sequence belongs to the GPI family.

It is found in the cytoplasm. It carries out the reaction alpha-D-glucose 6-phosphate = beta-D-fructose 6-phosphate. Its pathway is carbohydrate biosynthesis; gluconeogenesis. It functions in the pathway carbohydrate degradation; glycolysis; D-glyceraldehyde 3-phosphate and glycerone phosphate from D-glucose: step 2/4. Its function is as follows. Catalyzes the reversible isomerization of glucose-6-phosphate to fructose-6-phosphate. In Helicobacter pylori (strain P12), this protein is Glucose-6-phosphate isomerase.